Here is a 464-residue protein sequence, read N- to C-terminus: Ribosomal protein uS12 methylthiotransferase RimO (464 aa).

The MTTase N-terminal domain maps to Pro14 to Ala125. Residues Cys23, Cys59, Cys88, Cys163, Cys167, and Cys170 each contribute to the [4Fe-4S] cluster site. The Radical SAM core domain maps to Thr149–Glu378. The TRAM domain maps to His381–Gly452.

Belongs to the methylthiotransferase family. RimO subfamily. Requires [4Fe-4S] cluster as cofactor.

It is found in the cytoplasm. It carries out the reaction L-aspartate(89)-[ribosomal protein uS12]-hydrogen + (sulfur carrier)-SH + AH2 + 2 S-adenosyl-L-methionine = 3-methylsulfanyl-L-aspartate(89)-[ribosomal protein uS12]-hydrogen + (sulfur carrier)-H + 5'-deoxyadenosine + L-methionine + A + S-adenosyl-L-homocysteine + 2 H(+). Its function is as follows. Catalyzes the methylthiolation of an aspartic acid residue of ribosomal protein uS12. The chain is Ribosomal protein uS12 methylthiotransferase RimO from Parasynechococcus marenigrum (strain WH8102).